A 182-amino-acid polypeptide reads, in one-letter code: Ribosome maturation factor RimM (182 aa).

The PRC barrel domain maps to 102 to 182 (GEGDYYWKDL…TIEVDWDPGF (81 aa)).

The protein belongs to the RimM family. As to quaternary structure, binds ribosomal protein uS19.

The protein resides in the cytoplasm. In terms of biological role, an accessory protein needed during the final step in the assembly of 30S ribosomal subunit, possibly for assembly of the head region. Essential for efficient processing of 16S rRNA. May be needed both before and after RbfA during the maturation of 16S rRNA. It has affinity for free ribosomal 30S subunits but not for 70S ribosomes. The chain is Ribosome maturation factor RimM from Pectobacterium carotovorum subsp. carotovorum (strain PC1).